The chain runs to 272 residues: 2-C-methyl-D-erythritol 4-phosphate cytidylyltransferase (272 aa).

This sequence belongs to the IspD/TarI cytidylyltransferase family. IspD subfamily.

It catalyses the reaction 2-C-methyl-D-erythritol 4-phosphate + CTP + H(+) = 4-CDP-2-C-methyl-D-erythritol + diphosphate. It functions in the pathway isoprenoid biosynthesis; isopentenyl diphosphate biosynthesis via DXP pathway; isopentenyl diphosphate from 1-deoxy-D-xylulose 5-phosphate: step 2/6. Its function is as follows. Catalyzes the formation of 4-diphosphocytidyl-2-C-methyl-D-erythritol from CTP and 2-C-methyl-D-erythritol 4-phosphate (MEP). The polypeptide is 2-C-methyl-D-erythritol 4-phosphate cytidylyltransferase (Xanthomonas oryzae pv. oryzae (strain PXO99A)).